Here is a 93-residue protein sequence, read N- to C-terminus: Small ribosomal subunit protein uS19 (93 aa).

Disordered regions lie at residues Met-1–Glu-24 and Glu-73–Arg-93. Composition is skewed to basic and acidic residues over residues Pro-9–Ala-21 and Lys-81–Arg-93.

The protein belongs to the universal ribosomal protein uS19 family.

Protein S19 forms a complex with S13 that binds strongly to the 16S ribosomal RNA. This is Small ribosomal subunit protein uS19 from Kineococcus radiotolerans (strain ATCC BAA-149 / DSM 14245 / SRS30216).